Reading from the N-terminus, the 956-residue chain is Zinc protease PQQL-like (956 aa).

The residue at position 1 (Met-1) is an N-acetylmethionine. His-85 lines the Zn(2+) pocket. The Proton acceptor role is filled by Glu-88. His-89 provides a ligand contact to Zn(2+). Glu-165 is a catalytic residue. Zn(2+) is bound at residue Glu-172.

It belongs to the peptidase M16 family. It depends on Zn(2+) as a cofactor.

The chain is Zinc protease PQQL-like from Arabidopsis thaliana (Mouse-ear cress).